Consider the following 175-residue polypeptide: Gamma-crystallin M1 (175 aa).

Beta/gamma crystallin 'Greek key' domains follow at residues 2–40 (GKII…RVES), 41–86 (GCFM…RYPY), 89–121 (FRMR…RMSD), and 130–172 (GHWL…RRIT).

It belongs to the beta/gamma-crystallin family. In terms of assembly, monomer.

Functionally, crystallins are the dominant structural components of the vertebrate eye lens. This chain is Gamma-crystallin M1 (GM1), found in Chiloscyllium indicum (Slender bamboo shark).